A 595-amino-acid chain; its full sequence is Beta-(1--&gt;2)glucan export ATP-binding/permease protein NdvA (595 aa).

An ABC transmembrane type-1 domain is found at 21-301; it reads SLLICAANVM…MSNFINLTVS (281 aa). 5 helical membrane-spanning segments follow: residues 22–42, 55–75, 128–148, 152–172, and 248–268; these read LLIC…PILF, IILT…AYVL, AIWL…FILI, FNMN…YVLI, and TAST…VAKG. An ABC transporter domain is found at 335–569; that stretch reads VQFHHVTYKF…GGRFYKLLKA (235 aa). 368–375 lines the ATP pocket; it reads GPTGAGKT.

It belongs to the ABC transporter superfamily. Beta-(1--&gt;2)glucan exporter (TC 3.A.1.108.1) family. As to quaternary structure, homodimer.

Its subcellular location is the cell inner membrane. The enzyme catalyses [(1-&gt;2)-beta-D-glucosyl](n)(in) + ATP + H2O = [(1-&gt;2)-beta-D-glucosyl](n)(out) + ADP + phosphate + H(+). Its function is as follows. Involved in beta-(1--&gt;2)glucan export. Transmembrane domains (TMD) form a pore in the inner membrane and the ATP-binding domain (NBD) is responsible for energy generation. The chain is Beta-(1--&gt;2)glucan export ATP-binding/permease protein NdvA from Bartonella quintana (strain Toulouse) (Rochalimaea quintana).